The following is a 621-amino-acid chain: Pentatricopeptide repeat-containing protein At1g12620 (621 aa).

PPR repeat units lie at residues 36 to 70, 71 to 105, 106 to 140, 141 to 175, 176 to 210, 211 to 245, 246 to 280, 281 to 315, 316 to 350, 351 to 385, 386 to 420, 421 to 455, 456 to 490, 491 to 525, 526 to 560, and 561 to 595; these read GKVS…RPRP, RLID…GIAH, NLYT…GYEP, DTVT…GHKP, TLIT…GFQP, NEVT…KIKL, DAVK…GFKA, DIII…KITP, DVVA…GISP, DTVT…GCGP, NIRT…GVVA, DTVT…RVRP, DIVS…KMEL, DIGI…GVKP, DVKT…GHSP, and NGCT…GFSV.

This sequence belongs to the PPR family. P subfamily.

This is Pentatricopeptide repeat-containing protein At1g12620 from Arabidopsis thaliana (Mouse-ear cress).